The sequence spans 228 residues: PKHD-type hydroxylase RPE_4577 (228 aa).

The 103-residue stretch at 78-180 (TIFPPLFNRY…RIASFFWTQS (103 aa)) folds into the Fe2OG dioxygenase domain. The Fe cation site is built by histidine 98, aspartate 100, and histidine 161. Arginine 171 contributes to the 2-oxoglutarate binding site.

It depends on Fe(2+) as a cofactor. L-ascorbate serves as cofactor.

The protein is PKHD-type hydroxylase RPE_4577 of Rhodopseudomonas palustris (strain BisA53).